We begin with the raw amino-acid sequence, 25 residues long: Small ribosomal subunit protein eS32 (25 aa).

The disordered stretch occupies residues 1-25 (MRAKWRKKRVRRLKRKRRKTRARSK).

Belongs to the eukaryotic ribosomal protein eS32 family. Component of the small ribosomal subunit.

The protein is Small ribosomal subunit protein eS32 (RPL41) of Quercus suber (Cork oak).